Here is a 325-residue protein sequence, read N- to C-terminus: tRNA-dihydrouridine(16) synthase (325 aa).

FMN-binding positions include 12–14 (PMQ) and Gln73. The Proton donor role is filled by Cys103. FMN contacts are provided by residues Lys144, 205–207 (NGE), and 229–230 (GR).

Belongs to the Dus family. DusC subfamily. The cofactor is FMN.

It catalyses the reaction 5,6-dihydrouridine(16) in tRNA + NADP(+) = uridine(16) in tRNA + NADPH + H(+). The enzyme catalyses 5,6-dihydrouridine(16) in tRNA + NAD(+) = uridine(16) in tRNA + NADH + H(+). Catalyzes the synthesis of 5,6-dihydrouridine (D), a modified base found in the D-loop of most tRNAs, via the reduction of the C5-C6 double bond in target uridines. Specifically modifies U16 in tRNAs. In Haemophilus ducreyi (strain 35000HP / ATCC 700724), this protein is tRNA-dihydrouridine(16) synthase.